The following is a 235-amino-acid chain: uncharacterized protein (235 aa).

It belongs to the UreF family.

The protein resides in the cytoplasm. It is found in the nucleus. Functionally, probably facilitates nickel incorporation. This is an uncharacterized protein from Schizosaccharomyces pombe (strain 972 / ATCC 24843) (Fission yeast).